We begin with the raw amino-acid sequence, 90 residues long: DNA-binding protein HU-1 (90 aa).

T4 carries the phosphothreonine modification. Positions 55 to 90 (RSARKGRNPQTGEEIEIPATKNPAFKPGKQLKDAVN) are disordered.

This sequence belongs to the bacterial histone-like protein family. Homodimer.

In terms of biological role, histone-like DNA-binding protein which is capable of wrapping DNA to stabilize it, and thus to prevent its denaturation under extreme environmental conditions. The protein is DNA-binding protein HU-1 (hup1) of Halalkalibacterium halodurans (strain ATCC BAA-125 / DSM 18197 / FERM 7344 / JCM 9153 / C-125) (Bacillus halodurans).